Consider the following 65-residue polypeptide: Large ribosomal subunit protein bL35 (65 aa).

This sequence belongs to the bacterial ribosomal protein bL35 family.

The chain is Large ribosomal subunit protein bL35 from Thermotoga maritima (strain ATCC 43589 / DSM 3109 / JCM 10099 / NBRC 100826 / MSB8).